The sequence spans 277 residues: MHLSRYIAVLLSASSFVSALPLQNDVISDDGSKPIDAIMATAMEHKVVNPENLDATPATPENPEDLDKRFYYTGYKRNAETPEDLDKRFYYTGYKRNAETPEDLDKRFYYTGYKRNAETPEDLDKRFYYTGYKRNAETPEDLDKRFYYTGYKRNAETPEDLDKRFYYTGYKRNAETPDDLDKRFYYTGYKRNAETPDDLDKRFYYTGYKRNAETPEDLDKRFYYTGYKRNAETPEDLDKRFYYTGYKRNAETPEDLDKRFYYTGYKRNAETPEDLDK.

An N-terminal signal peptide occupies residues 1–19; it reads MHLSRYIAVLLSASSFVSA. Propeptides lie at residues 20–69, 76–88, 95–107, 114–126, 133–145, 152–164, 171–183, 190–202, 209–221, 228–240, 247–259, and 266–277; these read LPLQ…LDKR, KRNA…LDKR, and KRNAETPEDLDK.

Post-translationally, aprA is processed by kexin proteases to produce 11 identical copies of the hexapeptide Phe-Tyr-Tyr-Thr-Gly-Tyr, that is further modified aprY and aprR to yield asperipin-2a. The bicyclic structure of asperipin-2a is likely synthesized by the single ustYa family oxidase aprY. The reductase aprR may be required for the final reduction to yield asperipin-2a.

The protein operates within secondary metabolite biosynthesis. In terms of biological role, ribosomally synthesized cyclic peptide asperipin-2a precursor; part of the gene cluster that mediates the biosynthesis of the asperipin-2a, a bicyclic peptide that possesses two macrocyclic ether rings consisting of 14- and 17-membered paracyclophans. The aprA translated product contains a 11-fold repeated peptide embedding the hexapeptide Phe-Tyr-Tyr-Thr-Gly-Tyr, that is converted into asperipin-2a. After being excised from the precursor peptide by kexin proteases, the core peptides are cyclized and modified post-translationally by enzymes encoded within the corresponding gene cluster. The sequence is that of Ribosomally synthesized cyclic peptide asperipin-2a precursor aprA from Aspergillus flavus (strain ATCC 200026 / FGSC A1120 / IAM 13836 / NRRL 3357 / JCM 12722 / SRRC 167).